We begin with the raw amino-acid sequence, 159 residues long: Ribonuclease P protein component 2 (159 aa).

It belongs to the eukaryotic/archaeal RNase P protein component 2 family. In terms of assembly, consists of a catalytic RNA component and at least 4-5 protein subunits.

Its subcellular location is the cytoplasm. It catalyses the reaction Endonucleolytic cleavage of RNA, removing 5'-extranucleotides from tRNA precursor.. Part of ribonuclease P, a protein complex that generates mature tRNA molecules by cleaving their 5'-ends. The protein is Ribonuclease P protein component 2 of Halorubrum lacusprofundi (strain ATCC 49239 / DSM 5036 / JCM 8891 / ACAM 34).